Reading from the N-terminus, the 450-residue chain is UDP-N-acetylglucosamine--peptide N-acetylglucosaminyltransferase stabilizing protein GtfB (450 aa).

It belongs to the GtfB family. Forms a heterotetramer with 2 subunits each of GtfA and GtfB. Part of the accessory SecA2/SecY2 protein translocation apparatus required to export cell wall protein GspB.

Its subcellular location is the cell membrane. The protein operates within protein modification; protein glycosylation. In terms of biological role, required for polymorphic O-glycosylation of GspB, a serine-rich repeat cell wall protein encoded upstream in the same operon. A substrate-binding protein that is part of the accessory SecA2/SecY2 system specifically required to export GspB. The GtfA-GtfB complex adds GlcNAc from UDP-GlcNAc to GspB, attaching the first sugar residue. Upon coexpression in E.coli with GtfA glycosylates GspB constructs. Binds the GspB protein substrate; alone this subunit only recognizes partially glycosylated GspB, but is constrained by GtfA to also recognize unglycosylated protein. The enzyme probably modifies its tertiary conformation by opening and closing its intersubunit interfaces to accomodate the increasingly glycosylated substrate. This is UDP-N-acetylglucosamine--peptide N-acetylglucosaminyltransferase stabilizing protein GtfB from Streptococcus gordonii.